Reading from the N-terminus, the 512-residue chain is Histidine ammonia-lyase (512 aa).

Positions 142 to 144 (ASG) form a cross-link, 5-imidazolinone (Ala-Gly). At serine 143 the chain carries 2,3-didehydroalanine (Ser).

The protein belongs to the PAL/histidase family. In terms of processing, contains an active site 4-methylidene-imidazol-5-one (MIO), which is formed autocatalytically by cyclization and dehydration of residues Ala-Ser-Gly.

It localises to the cytoplasm. The catalysed reaction is L-histidine = trans-urocanate + NH4(+). It functions in the pathway amino-acid degradation; L-histidine degradation into L-glutamate; N-formimidoyl-L-glutamate from L-histidine: step 1/3. The protein is Histidine ammonia-lyase of Bartonella quintana (strain Toulouse) (Rochalimaea quintana).